Here is a 734-residue protein sequence, read N- to C-terminus: DNA ligase (734 aa).

NAD(+) is bound by residues 42–46 (DAEYD), 91–92 (SL), and E125. Residue K127 is the N6-AMP-lysine intermediate of the active site. R148, E185, K301, and K325 together coordinate NAD(+). Zn(2+)-binding residues include C430, C433, C454, and C460. Residues 655–734 (SADSEVAGKT…DTWLQRVGKA (80 aa)) enclose the BRCT domain.

This sequence belongs to the NAD-dependent DNA ligase family. LigA subfamily. Mg(2+) is required as a cofactor. The cofactor is Mn(2+).

It catalyses the reaction NAD(+) + (deoxyribonucleotide)n-3'-hydroxyl + 5'-phospho-(deoxyribonucleotide)m = (deoxyribonucleotide)n+m + AMP + beta-nicotinamide D-nucleotide.. In terms of biological role, DNA ligase that catalyzes the formation of phosphodiester linkages between 5'-phosphoryl and 3'-hydroxyl groups in double-stranded DNA using NAD as a coenzyme and as the energy source for the reaction. It is essential for DNA replication and repair of damaged DNA. This chain is DNA ligase, found in Mesorhizobium japonicum (strain LMG 29417 / CECT 9101 / MAFF 303099) (Mesorhizobium loti (strain MAFF 303099)).